Here is a 211-residue protein sequence, read N- to C-terminus: Cyclin-dependent kinase inhibitor 3 (211 aa).

The segment at Met-1–Val-20 is disordered. Residues Met-1–Leu-34 form an interaction with CDK2 region. Positions Leu-32 to Ser-200 constitute a Tyrosine-protein phosphatase domain. The active-site Phosphocysteine intermediate is Cys-140.

It belongs to the protein-tyrosine phosphatase family. Interacts with cyclin-dependent kinases such as CDK1, CDK2 and CDK3. Does not interact with CDK4. Interacts (via C-terminus) with phosphorylated CDK2 (via C-terminal helix). Interacts with MS4A3 (via C-terminus); the interaction enhances CDKN3 enzymatic activity.

It localises to the cytoplasm. Its subcellular location is the perinuclear region. The catalysed reaction is O-phospho-L-tyrosyl-[protein] + H2O = L-tyrosyl-[protein] + phosphate. It carries out the reaction O-phospho-L-seryl-[protein] + H2O = L-seryl-[protein] + phosphate. It catalyses the reaction O-phospho-L-threonyl-[protein] + H2O = L-threonyl-[protein] + phosphate. In terms of biological role, may play a role in cell cycle regulation. Dual specificity phosphatase active toward substrates containing either phosphotyrosine or phosphoserine residues. Dephosphorylates CDK2 at 'Thr-160' in a cyclin-dependent manner. In Mus musculus (Mouse), this protein is Cyclin-dependent kinase inhibitor 3.